A 253-amino-acid chain; its full sequence is Imidazole glycerol phosphate synthase subunit HisF (253 aa).

Active-site residues include Asp-11 and Asp-130.

It belongs to the HisA/HisF family. In terms of assembly, heterodimer of HisH and HisF.

The protein localises to the cytoplasm. The enzyme catalyses 5-[(5-phospho-1-deoxy-D-ribulos-1-ylimino)methylamino]-1-(5-phospho-beta-D-ribosyl)imidazole-4-carboxamide + L-glutamine = D-erythro-1-(imidazol-4-yl)glycerol 3-phosphate + 5-amino-1-(5-phospho-beta-D-ribosyl)imidazole-4-carboxamide + L-glutamate + H(+). The protein operates within amino-acid biosynthesis; L-histidine biosynthesis; L-histidine from 5-phospho-alpha-D-ribose 1-diphosphate: step 5/9. In terms of biological role, IGPS catalyzes the conversion of PRFAR and glutamine to IGP, AICAR and glutamate. The HisF subunit catalyzes the cyclization activity that produces IGP and AICAR from PRFAR using the ammonia provided by the HisH subunit. In Geotalea uraniireducens (strain Rf4) (Geobacter uraniireducens), this protein is Imidazole glycerol phosphate synthase subunit HisF.